Here is a 490-residue protein sequence, read N- to C-terminus: GTPase Der (490 aa).

2 EngA-type G domains span residues 3–166 (PVVA…MDDV) and 203–376 (IKLA…DSST). GTP contacts are provided by residues 9–16 (GRPNVGKS), 56–60 (DTGGI), 118–121 (NKTD), 209–216 (GRPNVGKS), 256–260 (DTAGV), and 321–324 (NKWD). The 85-residue stretch at 377-461 (RRVSTAMLTR…PIRIQFKEGE (85 aa)) folds into the KH-like domain.

The protein belongs to the TRAFAC class TrmE-Era-EngA-EngB-Septin-like GTPase superfamily. EngA (Der) GTPase family. In terms of assembly, associates with the 50S ribosomal subunit.

Its function is as follows. GTPase that plays an essential role in the late steps of ribosome biogenesis. This Citrobacter koseri (strain ATCC BAA-895 / CDC 4225-83 / SGSC4696) protein is GTPase Der.